The primary structure comprises 700 residues: UvrABC system protein B (700 aa).

The Helicase ATP-binding domain maps to 26–183; the sequence is SGLHRGDRIQ…RALVGIQYLR (158 aa). 39-46 provides a ligand contact to ATP; the sequence is GVTGSGKT. Residues 92–115 carry the Beta-hairpin motif; that stretch reads YYDYYQPEAYVPSSDTYIEKDASI. The Helicase C-terminal domain occupies 430-596; that stretch reads QVDDLLHEIR…GVTKSVDEVR (167 aa). The interval 608–627 is disordered; that stretch reads REGEAPAPRRLASESAPRSR. One can recognise a UVR domain in the interval 631–666; sequence ETLVGELEIAMREAAVALDFEAAARLRDQLFEVRTA. Residues 667-700 form a disordered region; sequence LGQAPSEARGNAQAPKRPPGSAPQRRAGGGRRGR.

This sequence belongs to the UvrB family. As to quaternary structure, forms a heterotetramer with UvrA during the search for lesions. Interacts with UvrC in an incision complex.

It localises to the cytoplasm. In terms of biological role, the UvrABC repair system catalyzes the recognition and processing of DNA lesions. A damage recognition complex composed of 2 UvrA and 2 UvrB subunits scans DNA for abnormalities. Upon binding of the UvrA(2)B(2) complex to a putative damaged site, the DNA wraps around one UvrB monomer. DNA wrap is dependent on ATP binding by UvrB and probably causes local melting of the DNA helix, facilitating insertion of UvrB beta-hairpin between the DNA strands. Then UvrB probes one DNA strand for the presence of a lesion. If a lesion is found the UvrA subunits dissociate and the UvrB-DNA preincision complex is formed. This complex is subsequently bound by UvrC and the second UvrB is released. If no lesion is found, the DNA wraps around the other UvrB subunit that will check the other stand for damage. The chain is UvrABC system protein B from Gemmatimonas aurantiaca (strain DSM 14586 / JCM 11422 / NBRC 100505 / T-27).